The sequence spans 194 residues: Archaetidylinositol phosphate synthase (194 aa).

The next 2 membrane-spanning stretches (helical) occupy residues I32 to I51 and L58 to G78. Mg(2+) is bound by residues D67, D70, D88, and D92. Catalysis depends on D92, which acts as the Proton acceptor. 3 consecutive transmembrane segments (helical) span residues L103 to V123, I150 to A170, and A172 to L192.

The protein belongs to the CDP-alcohol phosphatidyltransferase class-I family. Mn(2+) is required as a cofactor. It depends on Mg(2+) as a cofactor.

Its subcellular location is the cell membrane. The catalysed reaction is CDP-2,3-bis-O-(phytanyl)-sn-glycerol + 1D-myo-inositol 3-phosphate = saturated 1-archaetidyl-1D-myo-inositol 3-phosphate + CMP + H(+). It functions in the pathway lipid metabolism; phospholipid metabolism. Functionally, catalyzes the formation of archaetidylinositol phosphate (AIP) from CDP-archaeol (CDP-ArOH or CDP-2,3-bis-(O-phytanyl)-sn-glycerol) and 1L-myo-inositol 1-phosphate (IP or 1D-myo-inositol 3-phosphate). AIP is a precursor of archaetidyl-myo-inositol (AI), an ether-type inositol phospholipid ubiquitously distributed in archaea membranes and essential for glycolipid biosynthesis in archaea. The sequence is that of Archaetidylinositol phosphate synthase from Aeropyrum pernix (strain ATCC 700893 / DSM 11879 / JCM 9820 / NBRC 100138 / K1).